Here is a 601-residue protein sequence, read N- to C-terminus: Aspartate--tRNA(Asp/Asn) ligase (601 aa).

E187 is a binding site for L-aspartate. The interval 211-214 is aspartate; it reads QQFK. The L-aspartate site is built by R233 and H461. Position 233–235 (233–235) interacts with ATP; that stretch reads RDE. E495 serves as a coordination point for ATP. R502 lines the L-aspartate pocket. Residue 547–550 coordinates ATP; it reads GLDR.

The protein belongs to the class-II aminoacyl-tRNA synthetase family. Type 1 subfamily. In terms of assembly, homodimer.

It localises to the cytoplasm. It carries out the reaction tRNA(Asx) + L-aspartate + ATP = L-aspartyl-tRNA(Asx) + AMP + diphosphate. Its function is as follows. Aspartyl-tRNA synthetase with relaxed tRNA specificity since it is able to aspartylate not only its cognate tRNA(Asp) but also tRNA(Asn). Reaction proceeds in two steps: L-aspartate is first activated by ATP to form Asp-AMP and then transferred to the acceptor end of tRNA(Asp/Asn). The sequence is that of Aspartate--tRNA(Asp/Asn) ligase from Pelodictyon phaeoclathratiforme (strain DSM 5477 / BU-1).